Reading from the N-terminus, the 332-residue chain is Cysteine and histidine-rich domain-containing protein 1 (332 aa).

At Ala2 the chain carries N-acetylalanine. Residues 2 to 77 form an interaction with PPP5C region; it reads ALLCYNRGCG…KPPEPVKPEV (76 aa). Zn(2+) is bound by residues Cys5, Cys10, Cys24, His27, Cys42, and Cys43. CHORD domains are found at residues 5-64 and 157-216; these read CYNR…KGRH and CKNG…KGKH. Thr47 is modified (phosphothreonine). Position 51 is a phosphoserine (Ser51). Residues Cys59, His64, Cys157, Cys162, Cys176, His179, Cys194, Cys195, Cys211, and His216 each coordinate Zn(2+). The segment at 65–316 is interaction with HSP90AA1 and HSP90AB1; that stretch reads NSEKPPEPVK…AEPMQWASLE (252 aa). Residues 227–316 form the CS domain; it reads VVPCRHDWHQ…AEPMQWASLE (90 aa).

Interacts with HSP90AA1, ROCK1 and ROCK2. Interacts with HSP90AB1 and PPP5C. Underexpressed in many breast and lung cancers.

Functionally, regulates centrosome duplication, probably by inhibiting the kinase activity of ROCK2. Proposed to act as co-chaperone for HSP90. May play a role in the regulation of NOD1 via a HSP90 chaperone complex. In vitro, has intrinsic chaperone activity. This function may be achieved by inhibiting association of ROCK2 with NPM1. Plays a role in ensuring the localization of the tyrosine kinase receptor EGFR to the plasma membrane, and thus ensures the subsequent regulation of EGFR activity and EGF-induced actin cytoskeleton remodeling. Involved in stress response. Prevents tumorigenesis. In Homo sapiens (Human), this protein is Cysteine and histidine-rich domain-containing protein 1 (CHORDC1).